Here is a 270-residue protein sequence, read N- to C-terminus: Tetracenomycin polyketide synthesis O-methyltransferase TcmP (270 aa).

It participates in antibiotic biosynthesis; tetracenomycin C biosynthesis. Functionally, O-methyltransferase that catalyzes the methylation of the C-9 carboxy group of tetracenomycin E (TCM E) to yield TCM A2. Catalyzes as well the following side reactions: methylation of 8-O-methyl-TCM D3 to 9-carboxymethyl-8-O-methyl-TCM D3; and of TCM B3 to 9-carboxymethyl-TCM B3. This is Tetracenomycin polyketide synthesis O-methyltransferase TcmP (tcmP) from Streptomyces glaucescens.